We begin with the raw amino-acid sequence, 145 residues long: Probable inactive ribonuclease-like protein 12 (145 aa).

The signal sequence occupies residues 1–19 (MILMVIVFLLLLFWENELT). An N-linked (GlcNAc...) asparagine glycan is attached at asparagine 88.

This sequence belongs to the pancreatic ribonuclease family.

The protein resides in the secreted. In terms of biological role, does not exhibit any ribonuclease activity. The polypeptide is Probable inactive ribonuclease-like protein 12 (Rnase12) (Rattus norvegicus (Rat)).